The chain runs to 561 residues: Dihydroxy-acid dehydratase (561 aa).

C50 contacts [2Fe-2S] cluster. D82 is a binding site for Mg(2+). C123 serves as a coordination point for [2Fe-2S] cluster. Residues D124 and K125 each contribute to the Mg(2+) site. N6-carboxylysine is present on K125. C195 contributes to the [2Fe-2S] cluster binding site. E447 is a binding site for Mg(2+). S473 (proton acceptor) is an active-site residue.

This sequence belongs to the IlvD/Edd family. As to quaternary structure, homodimer. [2Fe-2S] cluster serves as cofactor. Requires Mg(2+) as cofactor.

It carries out the reaction (2R)-2,3-dihydroxy-3-methylbutanoate = 3-methyl-2-oxobutanoate + H2O. The catalysed reaction is (2R,3R)-2,3-dihydroxy-3-methylpentanoate = (S)-3-methyl-2-oxopentanoate + H2O. It participates in amino-acid biosynthesis; L-isoleucine biosynthesis; L-isoleucine from 2-oxobutanoate: step 3/4. It functions in the pathway amino-acid biosynthesis; L-valine biosynthesis; L-valine from pyruvate: step 3/4. Its function is as follows. Functions in the biosynthesis of branched-chain amino acids. Catalyzes the dehydration of (2R,3R)-2,3-dihydroxy-3-methylpentanoate (2,3-dihydroxy-3-methylvalerate) into 2-oxo-3-methylpentanoate (2-oxo-3-methylvalerate) and of (2R)-2,3-dihydroxy-3-methylbutanoate (2,3-dihydroxyisovalerate) into 2-oxo-3-methylbutanoate (2-oxoisovalerate), the penultimate precursor to L-isoleucine and L-valine, respectively. The protein is Dihydroxy-acid dehydratase of Microcystis aeruginosa (strain NIES-843 / IAM M-2473).